Consider the following 321-residue polypeptide: MTLKKIIPNLQKTQNNNNNSISSPLLPHTVQEYFPVIIIVGMSGAGKSTALHVFEDLQLVTADGIPPSLVTSMIHTVQSSSLEHVQGLALGINQHRIHTMQELEHTFQEMRSQHIYFTLLYLEADMPTLIKRYAATRRPHPLEQYHIGLEHALEEEAKRLIPIRQTADIVLDTTTYSIHDLRRFLQKSWNPYPEKIRSIKINIISFGFKYGVPNEADLLFDLRFLPNPYFVEELRPLSGMDKKVATYVLNSASGIKFKKHLIRFLSFLLPLYDAEGRYRITIALGCTGGKHRSVAISELLLHELTKKNYTVSIEHRHMELG.

An ATP-binding site is contributed by 41–48 (GMSGAGKS).

This sequence belongs to the RapZ-like family.

Its function is as follows. Displays ATPase and GTPase activities. In Lawsonia intracellularis (strain PHE/MN1-00), this protein is Nucleotide-binding protein LI0459.